Consider the following 142-residue polypeptide: Acidic phospholipase A2 PA4 (142 aa).

Ca(2+) is bound by residues tryptophan 10, glycine 12, and glycine 14. Disulfide bonds link cysteine 11/cysteine 33, cysteine 32/cysteine 72, and cysteine 39/cysteine 65. Residue histidine 36 is part of the active site. Aspartate 37 lines the Ca(2+) pocket.

Belongs to the phospholipase A2 family. Group III subfamily. Ca(2+) is required as a cofactor. Expressed by the venom gland.

The protein localises to the secreted. It carries out the reaction a 1,2-diacyl-sn-glycero-3-phosphocholine + H2O = a 1-acyl-sn-glycero-3-phosphocholine + a fatty acid + H(+). Functionally, PLA2 catalyzes the calcium-dependent hydrolysis of the 2-acyl groups in 3-sn-phosphoglycerides. The sequence is that of Acidic phospholipase A2 PA4 from Heloderma suspectum (Gila monster).